A 363-amino-acid polypeptide reads, in one-letter code: UDP-N-acetylglucosamine--N-acetylmuramyl-(pentapeptide) pyrophosphoryl-undecaprenol N-acetylglucosamine transferase (363 aa).

Residues 10-12, N124, S195, I248, and Q293 contribute to the UDP-N-acetyl-alpha-D-glucosamine site; that span reads TGG.

This sequence belongs to the glycosyltransferase 28 family. MurG subfamily.

Its subcellular location is the cell membrane. The catalysed reaction is Mur2Ac(oyl-L-Ala-gamma-D-Glu-L-Lys-D-Ala-D-Ala)-di-trans,octa-cis-undecaprenyl diphosphate + UDP-N-acetyl-alpha-D-glucosamine = beta-D-GlcNAc-(1-&gt;4)-Mur2Ac(oyl-L-Ala-gamma-D-Glu-L-Lys-D-Ala-D-Ala)-di-trans,octa-cis-undecaprenyl diphosphate + UDP + H(+). It functions in the pathway cell wall biogenesis; peptidoglycan biosynthesis. Functionally, cell wall formation. Catalyzes the transfer of a GlcNAc subunit on undecaprenyl-pyrophosphoryl-MurNAc-pentapeptide (lipid intermediate I) to form undecaprenyl-pyrophosphoryl-MurNAc-(pentapeptide)GlcNAc (lipid intermediate II). The sequence is that of UDP-N-acetylglucosamine--N-acetylmuramyl-(pentapeptide) pyrophosphoryl-undecaprenol N-acetylglucosamine transferase from Lacticaseibacillus casei (strain BL23) (Lactobacillus casei).